We begin with the raw amino-acid sequence, 50 residues long: Toxic protein HokE (50 aa).

A helical membrane pass occupies residues 5-25 (YALAAVIVLCLTVLGFTLLVG).

It belongs to the Hok/Gef family.

Its subcellular location is the cell inner membrane. Toxic component of a type I toxin-antitoxin (TA) system; if it expressed it could be neutralized by antisense antitoxin RNA SokE. The polypeptide is Toxic protein HokE (Escherichia coli (strain K12)).